The chain runs to 256 residues: Cell division protein DivIB (256 aa).

Residues 1 to 30 (MNNSKVIKLQDRVPKLKNQKKKNKKNVNHR) are Cytoplasmic-facing. A helical membrane pass occupies residues 31 to 51 (LILYISILFLLVLFLIYFRSP). Topologically, residues 52–256 (LSNIKKISVF…KELGAEEKKE (205 aa)) are extracellular. The region spanning 53 to 121 (SNIKKISVFG…NNIDIHIEEY (69 aa)) is the POTRA domain.

It belongs to the FtsQ/DivIB family. DivIB subfamily.

The protein localises to the cell membrane. Its function is as follows. Cell division protein that may be involved in stabilizing or promoting the assembly of the division complex. The protein is Cell division protein DivIB of Bacillus cereus (strain ATCC 14579 / DSM 31 / CCUG 7414 / JCM 2152 / NBRC 15305 / NCIMB 9373 / NCTC 2599 / NRRL B-3711).